We begin with the raw amino-acid sequence, 476 residues long: Aspartyl/glutamyl-tRNA(Asn/Gln) amidotransferase subunit B (476 aa).

Belongs to the GatB/GatE family. GatB subfamily. In terms of assembly, heterotrimer of A, B and C subunits.

It carries out the reaction L-glutamyl-tRNA(Gln) + L-glutamine + ATP + H2O = L-glutaminyl-tRNA(Gln) + L-glutamate + ADP + phosphate + H(+). The enzyme catalyses L-aspartyl-tRNA(Asn) + L-glutamine + ATP + H2O = L-asparaginyl-tRNA(Asn) + L-glutamate + ADP + phosphate + 2 H(+). Its function is as follows. Allows the formation of correctly charged Asn-tRNA(Asn) or Gln-tRNA(Gln) through the transamidation of misacylated Asp-tRNA(Asn) or Glu-tRNA(Gln) in organisms which lack either or both of asparaginyl-tRNA or glutaminyl-tRNA synthetases. The reaction takes place in the presence of glutamine and ATP through an activated phospho-Asp-tRNA(Asn) or phospho-Glu-tRNA(Gln). This is Aspartyl/glutamyl-tRNA(Asn/Gln) amidotransferase subunit B from Clostridium botulinum (strain Alaska E43 / Type E3).